A 685-amino-acid chain; its full sequence is MQDIQLDTLLSEDVTPENASQVMQALSQSLNEHNIRYYVDDAPSITDSEYDRLMQRLLKLEALYPHLIVADSPTQRVGGLALAKFDQITHLKPMLSLDNAFDEADFSAFHKRVTDKVGEVSFCCEPKLDGLAVSILYRHGVLERAATRGDGSVGEDITENVKTIKSIPLKLRGNDFPELVEVRGEAFMPKAAFEALNDRARAKDEKLFVNPRNAAAGSLRQLDSKITAARSLAFYAYALGVVEPDSHPLAKTHFEQLQQLKSWGLPVSSEIKVCAELSQVYDYYKDILTRRSDLAFEIDGVVMKVNDIDQQQRLGFVAKSPRWAIAYKFPAQEEMTLLEGVDFQVGRTGAVTPVARLKPVFVGGVTVSNATLHNANEIARLGIKVGDTVIIRRAGDVIPQIVAIVPERRPETATDIVFPHNCPVCGSLVERLEGEAVARCSGGLFCEAQRKEAIKHFASRKALDIDGMGDKVVEQLIDKELVQSPADLFKLTASMMTMLDRMGMKSATNLAAAIEAAKTTTLARFLYALGIREVGEATAANLAAHFASLDALRVATVEQLTEVEDVGAVVAQHVAHFFAQPHNLEVIDALIAAGVHWPAIEAPSAEAQPLKGQTWVLTGTLNQLNRNDAKAQLQALGAKVAGSVSKNTDCLVAGEAAGSKLAKAQELGVKVMDEDELLALLAANA.

Residues aspartate 47 to aspartate 51, serine 96 to leucine 97, and glutamate 125 contribute to the NAD(+) site. Lysine 127 functions as the N6-AMP-lysine intermediate in the catalytic mechanism. Positions 148, 185, 304, and 328 each coordinate NAD(+). The Zn(2+) site is built by cysteine 422, cysteine 425, cysteine 440, and cysteine 446. The BRCT domain maps to alanine 605–alanine 685.

Belongs to the NAD-dependent DNA ligase family. LigA subfamily. Requires Mg(2+) as cofactor. Mn(2+) serves as cofactor.

The catalysed reaction is NAD(+) + (deoxyribonucleotide)n-3'-hydroxyl + 5'-phospho-(deoxyribonucleotide)m = (deoxyribonucleotide)n+m + AMP + beta-nicotinamide D-nucleotide.. Functionally, DNA ligase that catalyzes the formation of phosphodiester linkages between 5'-phosphoryl and 3'-hydroxyl groups in double-stranded DNA using NAD as a coenzyme and as the energy source for the reaction. It is essential for DNA replication and repair of damaged DNA. This chain is DNA ligase, found in Shewanella baltica (strain OS223).